The following is a 219-amino-acid chain: Flagellar L-ring protein (219 aa).

The N-terminal stretch at methionine 1–glycine 14 is a signal peptide. Cysteine 15 is lipidated: N-palmitoyl cysteine. Cysteine 15 carries the S-diacylglycerol cysteine lipid modification.

Belongs to the FlgH family. In terms of assembly, the basal body constitutes a major portion of the flagellar organelle and consists of four rings (L,P,S, and M) mounted on a central rod.

Its subcellular location is the cell outer membrane. It localises to the bacterial flagellum basal body. Assembles around the rod to form the L-ring and probably protects the motor/basal body from shearing forces during rotation. This chain is Flagellar L-ring protein, found in Dechloromonas aromatica (strain RCB).